The following is a 281-amino-acid chain: 2,3,4,5-tetrahydropyridine-2,6-dicarboxylate N-succinyltransferase (281 aa).

Positions 108 and 145 each coordinate substrate.

Belongs to the transferase hexapeptide repeat family. Homotrimer.

It localises to the cytoplasm. It carries out the reaction (S)-2,3,4,5-tetrahydrodipicolinate + succinyl-CoA + H2O = (S)-2-succinylamino-6-oxoheptanedioate + CoA. Its pathway is amino-acid biosynthesis; L-lysine biosynthesis via DAP pathway; LL-2,6-diaminopimelate from (S)-tetrahydrodipicolinate (succinylase route): step 1/3. The chain is 2,3,4,5-tetrahydropyridine-2,6-dicarboxylate N-succinyltransferase from Methylobacterium nodulans (strain LMG 21967 / CNCM I-2342 / ORS 2060).